Consider the following 432-residue polypeptide: Trigger factor (432 aa).

Positions 161–246 (DDRVTIDFVG…LKKIENMVLP (86 aa)) constitute a PPIase FKBP-type domain.

The protein belongs to the FKBP-type PPIase family. Tig subfamily.

The protein resides in the cytoplasm. The catalysed reaction is [protein]-peptidylproline (omega=180) = [protein]-peptidylproline (omega=0). In terms of biological role, involved in protein export. Acts as a chaperone by maintaining the newly synthesized protein in an open conformation. Functions as a peptidyl-prolyl cis-trans isomerase. The polypeptide is Trigger factor (Haemophilus influenzae (strain 86-028NP)).